The following is a 117-amino-acid chain: Large ribosomal subunit protein bL19 (117 aa).

This sequence belongs to the bacterial ribosomal protein bL19 family.

This protein is located at the 30S-50S ribosomal subunit interface and may play a role in the structure and function of the aminoacyl-tRNA binding site. The polypeptide is Large ribosomal subunit protein bL19 (Paenarthrobacter aurescens (strain TC1)).